The sequence spans 311 residues: Methionyl-tRNA formyltransferase (311 aa).

Residue 110–113 (SLLP) coordinates (6S)-5,6,7,8-tetrahydrofolate.

The protein belongs to the Fmt family.

The enzyme catalyses L-methionyl-tRNA(fMet) + (6R)-10-formyltetrahydrofolate = N-formyl-L-methionyl-tRNA(fMet) + (6S)-5,6,7,8-tetrahydrofolate + H(+). Functionally, attaches a formyl group to the free amino group of methionyl-tRNA(fMet). The formyl group appears to play a dual role in the initiator identity of N-formylmethionyl-tRNA by promoting its recognition by IF2 and preventing the misappropriation of this tRNA by the elongation apparatus. This is Methionyl-tRNA formyltransferase from Streptococcus equi subsp. zooepidemicus (strain H70).